The primary structure comprises 383 residues: Queuine tRNA-ribosyltransferase (383 aa).

Aspartate 89 acts as the Proton acceptor in catalysis. Residues 89–93 (DSGGF), aspartate 143, glutamine 187, and glycine 214 contribute to the substrate site. The interval 245-251 (GVGDLID) is RNA binding. Aspartate 264 (nucleophile) is an active-site residue. The RNA binding; important for wobble base 34 recognition stretch occupies residues 269–273 (TRNAR). Zn(2+) contacts are provided by cysteine 302, cysteine 304, cysteine 307, and histidine 333.

Belongs to the queuine tRNA-ribosyltransferase family. Homodimer. Within each dimer, one monomer is responsible for RNA recognition and catalysis, while the other monomer binds to the replacement base PreQ1. Zn(2+) is required as a cofactor.

The catalysed reaction is 7-aminomethyl-7-carbaguanine + guanosine(34) in tRNA = 7-aminomethyl-7-carbaguanosine(34) in tRNA + guanine. Its pathway is tRNA modification; tRNA-queuosine biosynthesis. Its function is as follows. Catalyzes the base-exchange of a guanine (G) residue with the queuine precursor 7-aminomethyl-7-deazaguanine (PreQ1) at position 34 (anticodon wobble position) in tRNAs with GU(N) anticodons (tRNA-Asp, -Asn, -His and -Tyr). Catalysis occurs through a double-displacement mechanism. The nucleophile active site attacks the C1' of nucleotide 34 to detach the guanine base from the RNA, forming a covalent enzyme-RNA intermediate. The proton acceptor active site deprotonates the incoming PreQ1, allowing a nucleophilic attack on the C1' of the ribose to form the product. After dissociation, two additional enzymatic reactions on the tRNA convert PreQ1 to queuine (Q), resulting in the hypermodified nucleoside queuosine (7-(((4,5-cis-dihydroxy-2-cyclopenten-1-yl)amino)methyl)-7-deazaguanosine). The protein is Queuine tRNA-ribosyltransferase of Thermodesulfovibrio yellowstonii (strain ATCC 51303 / DSM 11347 / YP87).